The sequence spans 245 residues: 14-3-3 protein zeta/delta (245 aa).

Met-1 is modified (N-acetylmethionine). Lys-3 carries the N6-acetyllysine modification. Ser-58 carries the phosphoserine; by PKA modification. At Lys-68 the chain carries N6-acetyllysine. Phosphoserine occurs at positions 184, 207, and 210. Thr-232 is modified (phosphothreonine; by CK1).

This sequence belongs to the 14-3-3 family. As to quaternary structure, interacts with CDK16 and BSPRY. Interacts with WEE1 (C-terminal). Interacts with SAMSN1. Interacts with MLF1 (phosphorylated form); the interaction retains it in the cytoplasm. Interacts with Thr-phosphorylated ITGB2. Interacts with BCL2L11. Homodimer. Heterodimerizes with YWHAE. Homo- and heterodimerization is inhibited by phosphorylation on Ser-58. Interacts with FOXO4, NOXA1, SSH1 and ARHGEF2. Interacts with Pseudomonas aeruginosa exoS (unphosphorylated form). Interacts with BAX; the interaction occurs in the cytoplasm. Under stress conditions, MAPK8-mediated phosphorylation releases BAX to mitochondria. Interacts with phosphorylated RAF1; the interaction is inhibited when YWHAZ is phosphorylated on Thr-232. Interacts with TP53; the interaction enhances p53 transcriptional activity. The Ser-58 phosphorylated form inhibits this interaction and p53 transcriptional activity. Interacts with ABL1 (phosphorylated form); the interaction retains ABL1 in the cytoplasm. Interacts with PKA-phosphorylated AANAT; the interaction modulates AANAT enzymatic activity by increasing affinity for arylalkylamines and acetyl-CoA and protecting the enzyme from dephosphorylation and proteasomal degradation. It may also prevent thiol-dependent inactivation. Interacts with AKT1; the interaction phosphorylates YWHAZ and modulates dimerization. Interacts with GAB2 and TLK2. Interacts with the 'Thr-369' phosphorylated form of DAPK2. Interacts with PI4KB, TBC1D22A and TBC1D22B. Interacts with ZFP36L1 (via phosphorylated form); this interaction occurs in a p38 MAPK- and AKT-signaling pathways. Interacts with SLITRK1. Interacts with AK5, LDB1, MADD, MARK3, PDE1A and SMARCB1. Interacts with YWHAZ. Interacts with MEFV. Interacts with ADAM22 (via C-terminus). Post-translationally, the delta, brain-specific form differs from the zeta form in being phosphorylated. Phosphorylation on Ser-184 by MAPK8; promotes dissociation of BAX and translocation of BAX to mitochondria. Phosphorylation on Thr-232; inhibits binding of RAF1. Phosphorylated on Ser-58 by PKA and protein kinase C delta type catalytic subunit in a sphingosine-dependent fashion. Phosphorylation on Ser-58 by PKA; disrupts homodimerization and heterodimerization with YHAE and TP53. In terms of tissue distribution, highly expressed in brain (at protein level).

It localises to the cytoplasm. It is found in the melanosome. Adapter protein implicated in the regulation of a large spectrum of both general and specialized signaling pathways. Binds to a large number of partners, usually by recognition of a phosphoserine or phosphothreonine motif. Binding generally results in the modulation of the activity of the binding partner. Promotes cytosolic retention and inactivation of TFEB transcription factor by binding to phosphorylated TFEB. Induces ARHGEF7 activity on RAC1 as well as lamellipodia and membrane ruffle formation. In neurons, regulates spine maturation through the modulation of ARHGEF7 activity. In Ovis aries (Sheep), this protein is 14-3-3 protein zeta/delta (YWHAZ).